Consider the following 1150-residue polypeptide: MSLRFIYGRAGSGKSQYCLNSIKNRIEEDIDRPLILLVPEQFSFQAEKNLIEVLDEKTGFKTQVLSFKRMAYRVFNEVGGITAKHMNESGKSMLLYNIIEDNKNNLKVFKKAAKRQGFITTISDIITEFKRYNITPEIILNNLENIEGDNLKYKMEDLALIFSQFETRLHKNYIDNEDDLTILVEKLNKSKQFDNAEIWIDEFSSFSPQEYSVLEKLLLKSYRINITLCTDYLNQGRFVDTTDVFSPIKNTENKLLQIIEDNNIKLDKPIALKCDPCARFKNSAELQHLEKNMFSFPYKEYKNETKDICMLKTLNQFTEIENTAKDIIKLCIDKGCRFKDIAVITGDLEGYENIISSVFLQYNIPFFIDKKREINNNPIIVLILSALEVLSKNWTYESVFRYLKTGLLDINNEEMDILENYVLANGIKGYQWTNDKPWEHKSFSNYELEDQALKELLAKINDIRYKAMEPIVTLNKNFKSIDKAKEFCEVLYEFLCNINLPDKIQNMIEDFKVEGEIEKASEYNQIWNIVMEVLDQIVEVIGEEKISLKEFFKILQTGFSEYEIGLIPPTLDQVMVGSITRLRSHNINTLYIVGVNDGIFPSPLKEEGILSDDDREFLGDKGLEIAKDTKSIAFEEQFLVYSTLTTPSKYLRLSYPIADGEGKTLRPSIIISRIKKIFANICEENDIVKLNGEEEELKNISSAKPTFNYLISNLRKDVEGVKIDNIWGDTYKWYLENEFWIEKLNRLIKGFDYTNQSKYIETKKIRNLYGKPLKISVSRVEKFSQCPFAYFVQYGLKAKDRKIFNLSYPDLGIFMHSILEKFSHELEKKGLEWDTMDLNWAEEEIDKLINEELDNKSLDILNSSKRYEYVTKSVKKILKRSIWLIGEHIKRGNFKPSYYELSFDIDGDYPPIAMELHSGEVINLIGRVDRVDLLQKDGATYLKIIDYKSGIKEFKLSDVYYGLQLQLLIYLDAILTELAERSGINGEPGALLYLKLDDPIVKNTVDMSDEEIEKSIIKNLKMKGLILNDPNVIRDMDNIISGISDIIPVMVKKDGGVSEGRSSVATKEEFETLRKYVRYTIIEICEEMLEGNIEIKPYKKKDGSSCDYCIYSSVCKFDTNIRGNKYNILIDKKDEEVWDAIKKKLEYKNI.

8–15 (GRAGSGKS) lines the ATP pocket. [4Fe-4S] cluster contacts are provided by cysteine 786, cysteine 1106, cysteine 1109, and cysteine 1115.

Belongs to the helicase family. AddB/RexB type 1 subfamily. As to quaternary structure, heterodimer of AddA and AddB. It depends on Mg(2+) as a cofactor. [4Fe-4S] cluster is required as a cofactor.

The heterodimer acts as both an ATP-dependent DNA helicase and an ATP-dependent, dual-direction single-stranded exonuclease. Recognizes the chi site generating a DNA molecule suitable for the initiation of homologous recombination. The AddB subunit has 5' -&gt; 3' nuclease activity but not helicase activity. This is ATP-dependent helicase/deoxyribonuclease subunit B from Clostridium botulinum (strain Langeland / NCTC 10281 / Type F).